The primary structure comprises 1138 residues: Serine/threonine/tyrosine-interacting-like protein 2 (1138 aa).

The disordered stretch occupies residues Met1 to Ala20. Residues Asn132–Glu280 enclose the Tyrosine-protein phosphatase domain. Ser291 carries the phosphoserine modification. 8 disordered regions span residues Glu309–Ile336, Glu348–Met473, Ala486–Glu515, Lys552–Asn575, Gln592–Arg618, Ala660–Leu694, Ser761–Thr800, and Phe850–Ile1117. The span at Ser316–Lys331 shows a compositional bias: polar residues. Position 373 is a phosphoserine (Ser373). Over residues Asp376–Val385 the composition is skewed to acidic residues. Basic and acidic residues predominate over residues Glu386–Arg409. Thr427 carries the phosphothreonine modification. A phosphoserine mark is found at Ser503 and Ser555. Composition is skewed to basic and acidic residues over residues Lys552 to Glu567 and Val595 to Leu614. The segment covering Ser672 to Pro687 has biased composition (polar residues). Over residues Ser773–Ser788 the composition is skewed to low complexity. Residues Asp858–Asp871 are compositionally biased toward acidic residues. The residue at position 862 (Ser862) is a Phosphoserine. Residues Arg878–Ala897 show a composition bias toward polar residues. The residue at position 929 (Ser929) is a Phosphoserine. A compositionally biased stretch (low complexity) spans Ser936–Ser947. Positions Arg965–Asn977 are enriched in basic and acidic residues. The residue at position 966 (Ser966) is a Phosphoserine. Polar residues predominate over residues Thr980 to Thr992. Ser1016 bears the Phosphoserine mark. Composition is skewed to basic and acidic residues over residues Pro1035 to Phe1059 and Arg1074 to Arg1091. Residues Gly1095–Gln1106 are compositionally biased toward polar residues. The span at Gln1107–Ala1116 shows a compositional bias: acidic residues.

The protein belongs to the protein-tyrosine phosphatase family. Non-receptor class dual specificity subfamily.

The protein resides in the cytoplasm. The protein localises to the myofibril. Its subcellular location is the sarcomere. Functionally, may be required for myofiber maturation. The chain is Serine/threonine/tyrosine-interacting-like protein 2 (Styxl2) from Mus musculus (Mouse).